The chain runs to 239 residues: Protein GrpE (239 aa).

Disordered stretches follow at residues Met1–Asn54 and Ser208–Val239. The segment covering Gln19–Gln42 has biased composition (polar residues). Residues Lys43–Lys53 show a composition bias toward basic and acidic residues. Residues Asp228 to Val239 show a composition bias toward acidic residues.

This sequence belongs to the GrpE family. In terms of assembly, homodimer.

The protein localises to the cytoplasm. Functionally, participates actively in the response to hyperosmotic and heat shock by preventing the aggregation of stress-denatured proteins, in association with DnaK and GrpE. It is the nucleotide exchange factor for DnaK and may function as a thermosensor. Unfolded proteins bind initially to DnaJ; upon interaction with the DnaJ-bound protein, DnaK hydrolyzes its bound ATP, resulting in the formation of a stable complex. GrpE releases ADP from DnaK; ATP binding to DnaK triggers the release of the substrate protein, thus completing the reaction cycle. Several rounds of ATP-dependent interactions between DnaJ, DnaK and GrpE are required for fully efficient folding. This is Protein GrpE from Prochlorococcus marinus (strain AS9601).